Reading from the N-terminus, the 255-residue chain is Indole-3-glycerol phosphate synthase (255 aa).

Belongs to the TrpC family.

It carries out the reaction 1-(2-carboxyphenylamino)-1-deoxy-D-ribulose 5-phosphate + H(+) = (1S,2R)-1-C-(indol-3-yl)glycerol 3-phosphate + CO2 + H2O. The protein operates within amino-acid biosynthesis; L-tryptophan biosynthesis; L-tryptophan from chorismate: step 4/5. This Priestia megaterium (strain ATCC 12872 / QMB1551) (Bacillus megaterium) protein is Indole-3-glycerol phosphate synthase (trpC).